A 213-amino-acid chain; its full sequence is Large ribosomal subunit protein uL1 (213 aa).

Belongs to the universal ribosomal protein uL1 family. As to quaternary structure, part of the 50S ribosomal subunit.

Its function is as follows. Probably involved in E site tRNA release. Binds directly to 23S rRNA. Protein L1 is also a translational repressor protein, it controls the translation of its operon by binding to its mRNA. The chain is Large ribosomal subunit protein uL1 from Methanothermococcus thermolithotrophicus (Methanococcus thermolithotrophicus).